Reading from the N-terminus, the 482-residue chain is Argininosuccinate synthase (482 aa).

ATP is bound by residues 17–25 (AFSGGLDTS) and Ala43. Tyr99 serves as a coordination point for L-citrulline. Positions 129 and 131 each coordinate ATP. The L-aspartate site is built by Thr131, Asn135, and Asp136. Asn135 serves as a coordination point for L-citrulline. Asp136 contributes to the ATP binding site. The L-citrulline site is built by Arg139 and Ser192. Residue Asp194 participates in ATP binding. Residues Thr201, Glu203, and Glu280 each coordinate L-citrulline. A disordered region spans residues 461-482 (SRGEATDEETMLDRAAMESGTD).

It belongs to the argininosuccinate synthase family. Type 2 subfamily. In terms of assembly, homotetramer.

It localises to the cytoplasm. It carries out the reaction L-citrulline + L-aspartate + ATP = 2-(N(omega)-L-arginino)succinate + AMP + diphosphate + H(+). It participates in amino-acid biosynthesis; L-arginine biosynthesis; L-arginine from L-ornithine and carbamoyl phosphate: step 2/3. The polypeptide is Argininosuccinate synthase (argG) (Streptomyces lavendulae).